The chain runs to 274 residues: MAIVKCKPTSPGRRFVVKVVNQELHKGAPHAPLLEKKSKSGGRNNNGRITTRHVGGGHKQHYRLVDFRRNDKDGIAATVERIEYDPNRTAHIALLLYADGERRYIIAPKGVSAGDQLIAGALAPIKPGNALQLRNIPVGSTVHGIELKPGKGAQIARSAGASAQLVAREGVYVTLRLRSGEMRKVLAECRATLGEVSNSEHSLRSLGKAGAKRWRGVRPTVRGVAMNPVDHPHGGGEGRTSGGRHPVSPWGFPTKGAKTRGNKRTDKMIVRRRK.

Disordered stretches follow at residues 28 to 55 (APHAPLLEKKSKSGGRNNNGRITTRHVG) and 224 to 274 (VAMN…RRRK). Residues 263–274 (KRTDKMIVRRRK) are compositionally biased toward basic and acidic residues.

Belongs to the universal ribosomal protein uL2 family. In terms of assembly, part of the 50S ribosomal subunit. Forms a bridge to the 30S subunit in the 70S ribosome.

One of the primary rRNA binding proteins. Required for association of the 30S and 50S subunits to form the 70S ribosome, for tRNA binding and peptide bond formation. It has been suggested to have peptidyltransferase activity; this is somewhat controversial. Makes several contacts with the 16S rRNA in the 70S ribosome. This chain is Large ribosomal subunit protein uL2, found in Pseudomonas fluorescens (strain ATCC BAA-477 / NRRL B-23932 / Pf-5).